A 102-amino-acid polypeptide reads, in one-letter code: uncharacterized protein (102 aa).

A helical transmembrane segment spans residues 27–47 (TISLVSAGLLEEIFLLFGLTF).

It localises to the membrane. This is an uncharacterized protein from Saccharomyces cerevisiae (strain ATCC 204508 / S288c) (Baker's yeast).